A 477-amino-acid chain; its full sequence is Adenosylhomocysteinase (477 aa).

The substrate site is built by T63, D142, and E202. 203–205 (TTT) is a binding site for NAD(+). Residues K232 and D236 each contribute to the substrate site. Residues N237, 266–271 (GYGDVG), E289, N324, 345–347 (IGH), and N390 each bind NAD(+).

It belongs to the adenosylhomocysteinase family. NAD(+) is required as a cofactor.

It is found in the cytoplasm. The catalysed reaction is S-adenosyl-L-homocysteine + H2O = L-homocysteine + adenosine. The protein operates within amino-acid biosynthesis; L-homocysteine biosynthesis; L-homocysteine from S-adenosyl-L-homocysteine: step 1/1. Its function is as follows. May play a key role in the regulation of the intracellular concentration of adenosylhomocysteine. This is Adenosylhomocysteinase from Methylibium petroleiphilum (strain ATCC BAA-1232 / LMG 22953 / PM1).